A 223-amino-acid chain; its full sequence is Crossover junction endodeoxyribonuclease RuvC (223 aa).

Residues D12, E73, and D146 contribute to the active site. Mg(2+) is bound by residues D12, E73, and D146. Residues 182–223 (QGKLGKAKSTLNARNNAQVTGDAQVRAGHPSQFERPDRADPR) form a disordered region. Residues 190–202 (STLNARNNAQVTG) show a composition bias toward polar residues. Residues 213–223 (QFERPDRADPR) are compositionally biased toward basic and acidic residues.

This sequence belongs to the RuvC family. Homodimer which binds Holliday junction (HJ) DNA. The HJ becomes 2-fold symmetrical on binding to RuvC with unstacked arms; it has a different conformation from HJ DNA in complex with RuvA. In the full resolvosome a probable DNA-RuvA(4)-RuvB(12)-RuvC(2) complex forms which resolves the HJ. The cofactor is Mg(2+).

It localises to the cytoplasm. The enzyme catalyses Endonucleolytic cleavage at a junction such as a reciprocal single-stranded crossover between two homologous DNA duplexes (Holliday junction).. The RuvA-RuvB-RuvC complex processes Holliday junction (HJ) DNA during genetic recombination and DNA repair. Endonuclease that resolves HJ intermediates. Cleaves cruciform DNA by making single-stranded nicks across the HJ at symmetrical positions within the homologous arms, yielding a 5'-phosphate and a 3'-hydroxyl group; requires a central core of homology in the junction. The consensus cleavage sequence is 5'-(A/T)TT(C/G)-3'. Cleavage occurs on the 3'-side of the TT dinucleotide at the point of strand exchange. HJ branch migration catalyzed by RuvA-RuvB allows RuvC to scan DNA until it finds its consensus sequence, where it cleaves and resolves the cruciform DNA. This Corynebacterium efficiens (strain DSM 44549 / YS-314 / AJ 12310 / JCM 11189 / NBRC 100395) protein is Crossover junction endodeoxyribonuclease RuvC.